A 305-amino-acid chain; its full sequence is UDP-3-O-acyl-N-acetylglucosamine deacetylase (305 aa).

Zn(2+) is bound by residues H79, H238, and D242. H265 acts as the Proton donor in catalysis.

The protein belongs to the LpxC family. It depends on Zn(2+) as a cofactor.

The catalysed reaction is a UDP-3-O-[(3R)-3-hydroxyacyl]-N-acetyl-alpha-D-glucosamine + H2O = a UDP-3-O-[(3R)-3-hydroxyacyl]-alpha-D-glucosamine + acetate. It functions in the pathway glycolipid biosynthesis; lipid IV(A) biosynthesis; lipid IV(A) from (3R)-3-hydroxytetradecanoyl-[acyl-carrier-protein] and UDP-N-acetyl-alpha-D-glucosamine: step 2/6. Its function is as follows. Catalyzes the hydrolysis of UDP-3-O-myristoyl-N-acetylglucosamine to form UDP-3-O-myristoylglucosamine and acetate, the committed step in lipid A biosynthesis. This Erwinia tasmaniensis (strain DSM 17950 / CFBP 7177 / CIP 109463 / NCPPB 4357 / Et1/99) protein is UDP-3-O-acyl-N-acetylglucosamine deacetylase.